The primary structure comprises 713 residues: Fibroblast growth factor receptor 4 (713 aa).

The first 20 residues, 1 to 20, serve as a signal peptide directing secretion; sequence MLPLWLVLAGLLLAVGPAAS. The disordered stretch occupies residues 21–54; that stretch reads HRGEMEPDSLASGDDDEDSDGDGPHGDRSEEPVY. At 21 to 281 the chain is on the extracellular side; it reads HRGEMEPDSL…AETSEAKYTD (261 aa). Residues 42-54 show a composition bias toward basic and acidic residues; sequence DGPHGDRSEEPVY. 2 consecutive Ig-like C2-type domains span residues 59 to 152 and 161 to 261; these read PYWT…YLLD and PILQ…AWLT. Cysteines 84 and 136 form a disulfide. N-linked (GlcNAc...) asparagine glycosylation is found at asparagine 133, asparagine 170, asparagine 202, asparagine 223, and asparagine 234. Cysteine 183 and cysteine 245 are disulfide-bonded. Residues 282 to 302 traverse the membrane as a helical segment; that stretch reads IIIYTSGSLAVAMALIIVVLC. Residues 303–713 lie on the Cytoplasmic side of the membrane; it reads RMQTQSSKQP…CLFSCPSGRT (411 aa). A Protein kinase domain is found at 379–667; sequence LVLGKPLGEG…ILAAISEEYL (289 aa). Residues 385 to 393 and lysine 415 contribute to the ATP site; that span reads LGEGCFGQV. The active-site Proton acceptor is the aspartate 524. Phosphotyrosine; by autocatalysis occurs at positions 554, 555, and 666.

It belongs to the protein kinase superfamily. Tyr protein kinase family. Fibroblast growth factor receptor subfamily. Monomer. Homodimer after ligand binding. Interacts with FGF1, FGF2, FGF4, FGF6, FGF8, FGF9, FGF16, FGF17, FGF18, FGF19, FGF21 and FGF23 (in vitro). Binding affinity for FGF family members is enhanced by interactions between FGFs and heparan sulfate proteoglycans. Interacts with KLB; this strongly increases the affinity for FGF19 and FGF23. Affinity for FGF19 is strongly increased by KLB and sulfated glycosaminoglycans. KLB and KL both interact with the core-glycosylated FGFR4 in the endoplasmic reticulum and promote its degradation, so that only FGFR4 with fully mature N-glycans is expressed at the cell surface. Identified in a complex with NCAM1, CDH2, PLCG1, FRS2, SRC, SHC1, GAP43 and CTTN. Interacts with MMP14 and HIP1. Interacts with STAT3. In terms of processing, N-glycosylated. Full maturation of the glycan chains in the Golgi is essential for high affinity interaction with FGF19. Post-translationally, ubiquitinated. Subject to proteasomal degradation when not fully glycosylated. Autophosphorylated. Binding of FGF family members together with heparan sulfate proteoglycan or heparin promotes receptor dimerization and autophosphorylation on tyrosine residues. Autophosphorylation occurs in trans between the two FGFR molecules present in the dimer.

The protein localises to the cell membrane. Its subcellular location is the endosome. It localises to the endoplasmic reticulum. The enzyme catalyses L-tyrosyl-[protein] + ATP = O-phospho-L-tyrosyl-[protein] + ADP + H(+). Present in an inactive conformation in the absence of bound ligand. Ligand binding leads to dimerization and activation by autophosphorylation on tyrosine residues. Tyrosine-protein kinase that acts as a cell-surface receptor for fibroblast growth factors and plays a role in the regulation of cell proliferation, differentiation and migration, and in regulation of lipid metabolism, bile acid biosynthesis, glucose uptake, vitamin D metabolism and phosphate homeostasis. Required for normal down-regulation of the expression of CYP7A1, the rate-limiting enzyme in bile acid synthesis, in response to FGF19. Phosphorylates PLCG1 and FRS2. Ligand binding leads to the activation of several signaling cascades. Activation of PLCG1 leads to the production of the cellular signaling molecules diacylglycerol and inositol 1,4,5-trisphosphate. Phosphorylation of FRS2 triggers recruitment of GRB2, GAB1, PIK3R1 and SOS1, and mediates activation of RAS, MAPK1/ERK2, MAPK3/ERK1 and the MAP kinase signaling pathway, as well as of the AKT1 signaling pathway. Promotes SRC-dependent phosphorylation of the matrix protease MMP14 and its lysosomal degradation. FGFR4 signaling is down-regulated by receptor internalization and degradation; MMP14 promotes internalization and degradation of FGFR4. This chain is Fibroblast growth factor receptor 4 (FGFR4), found in Coturnix coturnix (Common quail).